Reading from the N-terminus, the 241-residue chain is Interleukin-6 (241 aa).

Residues 1-26 (MNSFTSALRPGPLGCSLALLLVVATA) form the signal peptide. Residues 32 to 51 (PVREDSNTKASPDKTLTPPG) form a disordered region. Disulfide bonds link C72/C78 and C101/C111. An N-linked (GlcNAc...) asparagine glycan is attached at N108.

This sequence belongs to the IL-6 superfamily. In terms of assembly, component of a hexamer of two molecules each of IL6, IL6R and IL6ST; first binds to IL6R to associate with the signaling subunit IL6ST. Interacts with IL6R (via the N-terminal ectodomain); this interaction may be affected by IL6R-binding with SORL1, hence decreasing IL6 cis signaling. Interacts with SORL1 (via the N-terminal ectodomain); this interaction leads to IL6 internalization and lysosomal degradation. May form a trimeric complex with the soluble SORL1 ectodomain and soluble IL6R receptor; this interaction might stabilize circulating IL6, hence promoting IL6 trans signaling.

Its subcellular location is the secreted. In terms of biological role, cytokine with a wide variety of biological functions in immunity, tissue regeneration, and metabolism. Binds to IL6R, then the complex associates to the signaling subunit IL6ST/gp130 to trigger the intracellular IL6-signaling pathway. The interaction with the membrane-bound IL6R and IL6ST stimulates 'classic signaling', whereas the binding of IL6 and soluble IL6R to IL6ST stimulates 'trans-signaling'. Alternatively, 'cluster signaling' occurs when membrane-bound IL6:IL6R complexes on transmitter cells activate IL6ST receptors on neighboring receiver cells. Functionally, IL6 is a potent inducer of the acute phase response. Rapid production of IL6 contributes to host defense during infection and tissue injury, but excessive IL6 synthesis is involved in disease pathology. In the innate immune response, is synthesized by myeloid cells, such as macrophages and dendritic cells, upon recognition of pathogens through toll-like receptors (TLRs) at the site of infection or tissue injury. In the adaptive immune response, is required for the differentiation of B cells into immunoglobulin-secreting cells. Plays a major role in the differentiation of CD4(+) T cell subsets. Essential factor for the development of T follicular helper (Tfh) cells that are required for the induction of germinal-center formation. Required to drive naive CD4(+) T cells to the Th17 lineage. Also required for proliferation of myeloma cells and the survival of plasmablast cells. Its function is as follows. Acts as an essential factor in bone homeostasis and on vessels directly or indirectly by induction of VEGF, resulting in increased angiogenesis activity and vascular permeability. Induces, through 'trans-signaling' and synergistically with IL1B and TNF, the production of VEGF. Involved in metabolic controls, is discharged into the bloodstream after muscle contraction increasing lipolysis and improving insulin resistance. 'Trans-signaling' in central nervous system also regulates energy and glucose homeostasis. Mediates, through GLP-1, crosstalk between insulin-sensitive tissues, intestinal L cells and pancreatic islets to adapt to changes in insulin demand. Also acts as a myokine. Plays a protective role during liver injury, being required for maintenance of tissue regeneration. Also has a pivotal role in iron metabolism by regulating HAMP/hepcidin expression upon inflammation or bacterial infection. Through activation of IL6ST-YAP-NOTCH pathway, induces inflammation-induced epithelial regeneration. The sequence is that of Interleukin-6 (IL6) from Oryctolagus cuniculus (Rabbit).